Consider the following 1637-residue polypeptide: Acrosomal protein KIAA1210 (1637 aa).

Disordered stretches follow at residues 44–121 (RFSS…LSIS), 141–293 (RTTT…KNEW), 341–404 (PTTT…KKKD), 438–759 (VCGE…SQSE), 865–896 (PKLP…EGST), 935–975 (SKYS…FQPL), 1017–1057 (LQPW…IPSQ), 1090–1137 (FPFQ…SRRA), 1182–1238 (SQTI…SKSF), and 1539–1558 (NKGD…PAFS). Positions 103–114 (HRSKSLKIKSQR) are enriched in basic residues. Residues 141-156 (RTTTTFRRRSSQCSST) are compositionally biased toward low complexity. Positions 170-190 (SESSTQQFSGFSTPATSQGCL) are enriched in polar residues. Positions 229–249 (AKEKTTTKTKEAEQGEQKVDS) are enriched in basic and acidic residues. Positions 250 to 261 (TELSSQEQSSKT) are enriched in low complexity. Residues 341–353 (PTTTEAEVTTVQK) are compositionally biased toward polar residues. The span at 355 to 374 (PSDKGDVERELADIDVEAQK) shows a compositional bias: basic and acidic residues. Over residues 508–526 (TGETSSDSKSTSEYESSSE) the composition is skewed to low complexity. Over residues 550–572 (ADDEEDGDDEKEEKDNDDDDEEN) the composition is skewed to acidic residues. Low complexity predominate over residues 689 to 698 (DLSSSEQEQQ). 5 stretches are compositionally biased toward polar residues: residues 745-759 (SPTQ…SQSE), 879-896 (GKQS…EGST), 935-956 (SKYS…STSA), 964-975 (SQPSVTPKFQPL), and 1017-1030 (LQPW…QVSV).

As to quaternary structure, interacts with TOP2B. As to expression, predominantly expressed in testis (at protein level).

The protein resides in the cytoplasmic vesicle. It localises to the secretory vesicle. It is found in the acrosome. This Mus musculus (Mouse) protein is Acrosomal protein KIAA1210.